The chain runs to 314 residues: Protein ATP1B4 (314 aa).

The span at 1–17 shows a compositional bias: polar residues; that stretch reads MATTAGEQANYLQSADS. The disordered stretch occupies residues 1-37; sequence MATTAGEQANYLQSADSMSDGRQHHPEEAGEKKQEEQ. Topologically, residues 1–69 are cytoplasmic; that stretch reads MATTAGEQAN…VLGRDKKSWA (69 aa). Positions 19–37 are enriched in basic and acidic residues; it reads SDGRQHHPEEAGEKKQEEQ. A helical membrane pass occupies residues 70–90; the sequence is LILLFYFILYCFLAGLFALCI. The Extracellular portion of the chain corresponds to 91–314; the sequence is YGLLATISPY…GRVAFTLHIG (224 aa). An intrachain disulfide couples Cys160 to Cys179. Asn188 is a glycosylation site (N-linked (GlcNAc...) asparagine). 2 cysteine pairs are disulfide-bonded: Cys189–Cys205 and Cys228–Cys287. Asn264 is a glycosylation site (N-linked (GlcNAc...) asparagine).

It belongs to the X(+)/potassium ATPases subunit beta family. In terms of assembly, composed of two subunits: alpha (catalytic) and beta (accessory). In terms of processing, glycosylated. Expressed in skeletal muscle, liver, lung, kidney, heart, brain and skin.

The protein localises to the membrane. This is the non-catalytic component of the active enzyme, which catalyzes the hydrolysis of ATP coupled with the exchange of Na(+) and K(+) ions across the plasma membrane. The chain is Protein ATP1B4 (atp1b4) from Xenopus laevis (African clawed frog).